Here is a 204-residue protein sequence, read N- to C-terminus: Bcl-2-like protein 10 (204 aa).

Residues 86 to 105 (LSDSPGPTWGRVVTLVTFAG) carry the BH1 motif. A required for Ca(2+) binding region spans residues 118–133 (WKKWGFQPRLKEQEGD). Residues lysine 119, lysine 120, and lysine 128 each participate in a glycyl lysine isopeptide (Lys-Gly) (interchain with G-Cter in ubiquitin) cross-link. A BH2 motif is present at residues 156-167 (WLQAQGGWDGFC). A helical transmembrane segment spans residues 183-200 (LVQAFLSCLLTTAFIYLW).

This sequence belongs to the Bcl-2 family. In terms of assembly, interacts with BAX. Interacts with BCL2 and BCL2L1/BCLX. Interacts with APAF1. Interacts with ITPR1, ITPR2 and ITPR3; the interaction with ITPR1 is increased in the presence of AHCLY1. Interacts with AHCYL1. Interacts with HIP1R (via ENTH and I/LWEQ domains). Interacts with CASP9. Interacts with BCL2L11/BIM. Interacts with BIK. Interacts with UBQLN4. Interacts with NME2/NM23-H2. Interacts with PMAIP1/NOXA. Interacts with TPX2. Interacts with UBQLN1; in the cytoplasm. Interacts (via BH1 domain) with BECN1. The cofactor is Ca(2+). Monoubiquitinated by UBQLN1; results in stabilization of BCL2L10 protein abundance and in relocalization from mitochondria to cytoplasm. As to expression, widely expressed in adult tissues. Preferentially expressed in lung, liver and kidney.

The protein localises to the mitochondrion. It localises to the nucleus membrane. The protein resides in the endoplasmic reticulum. Its subcellular location is the cytoplasm. It is found in the cytoskeleton. The protein localises to the spindle. Functionally, promotes cell survival by suppressing apoptosis induced by BAX but not BAK. Increases binding of AHCYL1/IRBIT to ITPR1. Reduces ITPR1-mediated calcium release from the endoplasmic reticulum cooperatively with AHCYL1/IRBIT under normal cellular conditions. Under apoptotic stress conditions, dissociates from ITPR1 and is displaced from mitochondria-associated endoplasmic reticulum membranes, leading to increased Ca(2+) transfer to mitochondria which promotes apoptosis. Required for the correct formation of the microtubule organizing center during oocyte cell division, potentially via regulation of protein abundance and localization of other microtubule organizing center components such as AURKA and TPX2. The polypeptide is Bcl-2-like protein 10 (Homo sapiens (Human)).